A 350-amino-acid polypeptide reads, in one-letter code: MFS transporter OpS2 (350 aa).

8 helical membrane passes run 3-23, 34-54, 65-85, 141-161, 174-194, 227-247, 253-273, and 312-332; these read FLAG…VADL, GYFF…GGIL, WGAV…LPET, FMTC…NLAI, AIIL…ASVV, MCEN…VFGW, IFWF…SLIF, and PLLG…ICWA.

The protein belongs to the major facilitator superfamily.

The protein localises to the cell membrane. Functionally, MFS transporter; part of the gene cluster that mediates the biosynthesis of the bibenzoquinone oosporein, a metabolite required for fungal virulence that acts by evading host immunity to facilitate fungal multiplication in insects. The function of this putative MFS transporter remains unclear since its deletion leads to increased oosporein production. The polypeptide is MFS transporter OpS2 (Beauveria bassiana (strain ARSEF 2860) (White muscardine disease fungus)).